The chain runs to 575 residues: DNA polymerase lambda (575 aa).

The 97-residue stretch at 36 to 132 folds into the BRCT domain; the sequence is EAEEWLSSLR…RLVDVAGFSI (97 aa). Residues 160-205 form a disordered region; sequence ALLQTALPPPPSPTRPVSPPQKTKEAPNTQAQPISDDEASDGEETQ. Residues 166–178 are compositionally biased toward pro residues; sequence LPPPPSPTRPVSP. Residues 194–203 show a composition bias toward acidic residues; the sequence is SDDEASDGEE. Residues 265 to 279 form a DNA-binding region; it reads KAYSVQGDKWRALGY. The active-site Schiff-base intermediate with DNA is the Lys312. The interval 345–348 is DNA-binding; the sequence is GTKT. DCTP contacts are provided by residues Arg386, 417-420, and 426-429; these read SYRR and GDVD. Positions 420 to 429 are involved in primer binding; it reads RGKATCGDVD. Mn(2+)-binding residues include Asp427, Asp429, and Asp490. Positions 466 to 505 are DNA-binding; the sequence is ENGQQQKYLGVCRLPGPGWRHRRLDIIVVPYSEFACALLY. Asn513 contributes to the dCTP binding site.

Belongs to the DNA polymerase type-X family. Interacts with PCNA. Interacts with PAXX; promoting POLL recruitment to double-strand breaks (DSBs) and stimulation of the end-filling activity of POLL. Interacts with XRCC4; promoting POLL recruitment to double-strand breaks (DSBs) and stimulation of the end-filling activity of POLL. Interacts with NHEJ1/XLF; promoting POLL recruitment to double-strand breaks (DSBs) and stimulation of the end-filling activity of POLL. Requires Mn(2+) as cofactor.

It is found in the nucleus. The enzyme catalyses DNA(n) + a 2'-deoxyribonucleoside 5'-triphosphate = DNA(n+1) + diphosphate. DNA polymerase that functions in several pathways of DNA repair. Involved in base excision repair (BER) responsible for repair of lesions that give rise to abasic (AP) sites in DNA. Also contributes to DNA double-strand break repair by non-homologous end joining and homologous recombination. Has both template-dependent and template-independent (terminal transferase) DNA polymerase activities. Also has a 5'-deoxyribose-5-phosphate lyase (dRP lyase) activity. The sequence is that of DNA polymerase lambda from Macaca fascicularis (Crab-eating macaque).